Consider the following 365-residue polypeptide: 2-aminoethylphosphonate--pyruvate transaminase (365 aa).

N6-(pyridoxal phosphate)lysine is present on K194.

It belongs to the class-V pyridoxal-phosphate-dependent aminotransferase family. PhnW subfamily. Homodimer. It depends on pyridoxal 5'-phosphate as a cofactor.

It carries out the reaction (2-aminoethyl)phosphonate + pyruvate = phosphonoacetaldehyde + L-alanine. Functionally, involved in phosphonate degradation. The chain is 2-aminoethylphosphonate--pyruvate transaminase from Bacillus cereus (strain G9842).